A 497-amino-acid chain; its full sequence is E3 ubiquitin-protein ligase CBL-C (497 aa).

Positions 7–145 (PQGWQWGEPR…SALFPEGKYC (139 aa)) are 4H. Residues 7–321 (PQGWQWGEPR…GKNHNPDLTE (315 aa)) enclose the Cbl-PTB domain. Residues 146-218 (GHLYQITKGS…FEFDIFTRLF (73 aa)) are EF-hand-like. Residues Asp199, Thr201, and Glu210 each contribute to the Ca(2+) site. Residues 219–321 (QPWPTLLKNW…GKNHNPDLTE (103 aa)) are SH2-like. Arg264 is a 4-O-phospho-L-tyrosine binding site. Positions 322 to 350 (LCRAVLNQCIQVSQEQLQLYQAMNSTFEL) are linker. Tyr341 bears the Phosphotyrosine; by SRC mark. Residues 351–390 (CKICTERDKDVRIEPCGHLLCSCCLAAWQHSDSQTCPFCR) form an RING-type zinc finger. Residues 351 to 497 (CKICTERDKD…QVREGATESS (147 aa)) form an interaction with RET region.

Interacts with Ubiquitin-conjugating enzyme E2 UBE2D2 and UBE2D3. Interacts with EGFR (tyrosine phosphorylated). Interacts with the SH3 domain proteins LYN and CRK. Interacts (via RING-type zinc finger) with TGFB1I1 (via LIM zinc-binding domain 2); the interaction is direct and enhances the E3 activity. Interacts directly with RET (inactive) and CD2AP; dissociates from RET upon RET activation by GDNF which also increases the interaction with CD2AP suggesting dissociation as CBLC:CD2AP complex. Interacts with SRC; the interaction is enhanced when SRC is phosphorylated at 'Tyr-419'. In terms of processing, phosphorylated on multiple tyrosine residues by SRC. Autoubiquitinated, when phosphorylated at Tyr-341.

It carries out the reaction S-ubiquitinyl-[E2 ubiquitin-conjugating enzyme]-L-cysteine + [acceptor protein]-L-lysine = [E2 ubiquitin-conjugating enzyme]-L-cysteine + N(6)-ubiquitinyl-[acceptor protein]-L-lysine.. With respect to regulation, phosphorylation at Tyr-341 is necessary and sufficient for the activation of E3 activity. In terms of biological role, acts as an E3 ubiquitin-protein ligase, which accepts ubiquitin from specific E2 ubiquitin-conjugating enzymes, and then transfers it to substrates promoting their degradation by the proteasome. Functionally coupled with the E2 ubiquitin-protein ligases UB2D1, UB2D2 and UB2D3. Regulator of EGFR mediated signal transduction; upon EGF activation, ubiquitinates EGFR. Inhibits EGF stimulated MAPK1 activation. Promotes ubiquitination of SRC phosphorylated at 'Tyr-419', has the highest ubiquitin ligase activity among CBL family proteins. In collaboration with CD2AP may act as regulatory checkpoint for Ret signaling by modulating the rate of RET degradation after ligand activation; CD2AP converts it from an inhibitor to a promoter of RET degradation; the function limits the potency of GDNF on neuronal survival. In Rattus norvegicus (Rat), this protein is E3 ubiquitin-protein ligase CBL-C (Cblc).